The chain runs to 328 residues: MSVQHVYEITVIGGGPVGMFAAFYAGLRQADVLLLESLDELGGQTGNLYPAKILYDIGGFPHVSGKDLVTQLKTQLVHFHPEVKTATEVQTIDQDPDGFFTLHTSQGDFRSKTVIVATGGGAFTPRKLAVDYDPALEGKKLFYFVQDLETFRDQEVAVAGGGDSAIDWALALEPVAKHVSLIHRRAKFRGLEASVAALEKSSVTIQTPYLIESVTPQDDQLAIQLKEVRGEAQPTLTVDKLLINYGFVTDKHHLQAWQLDTDRNGILVDTQMQTSRPGIFAIGDAVSYAGKLPLIASGFGEAPTAINEALSRLYPDRRQALHSTQLYH.

Residues E36, Q44, Y49, V89, F123, D284, and T324 each contribute to the FAD site.

The protein belongs to the ferredoxin--NADP reductase type 2 family. As to quaternary structure, homodimer. FAD serves as cofactor.

It catalyses the reaction 2 reduced [2Fe-2S]-[ferredoxin] + NADP(+) + H(+) = 2 oxidized [2Fe-2S]-[ferredoxin] + NADPH. The protein is Ferredoxin--NADP reductase of Lacticaseibacillus paracasei (strain ATCC 334 / BCRC 17002 / CCUG 31169 / CIP 107868 / KCTC 3260 / NRRL B-441) (Lactobacillus paracasei).